The following is a 166-amino-acid chain: Lipoprotein signal peptidase (166 aa).

The next 4 helical transmembrane spans lie at 9–29 (ASGA…FDQL), 45–65 (ALTS…FGFL), 71–91 (WQRW…CFLL), and 100–120 (FSLS…DRLV). Active-site residues include D126 and D144. Residues 135-155 (WHFPAFNLADSAITIGAVLLV) form a helical membrane-spanning segment.

This sequence belongs to the peptidase A8 family.

Its subcellular location is the cell inner membrane. The enzyme catalyses Release of signal peptides from bacterial membrane prolipoproteins. Hydrolyzes -Xaa-Yaa-Zaa-|-(S,diacylglyceryl)Cys-, in which Xaa is hydrophobic (preferably Leu), and Yaa (Ala or Ser) and Zaa (Gly or Ala) have small, neutral side chains.. It participates in protein modification; lipoprotein biosynthesis (signal peptide cleavage). Functionally, this protein specifically catalyzes the removal of signal peptides from prolipoproteins. The protein is Lipoprotein signal peptidase of Burkholderia ambifaria (strain ATCC BAA-244 / DSM 16087 / CCUG 44356 / LMG 19182 / AMMD) (Burkholderia cepacia (strain AMMD)).